We begin with the raw amino-acid sequence, 359 residues long: 3-dehydroquinate synthase (359 aa).

NAD(+) contacts are provided by residues 72 to 77, 106 to 110, 130 to 131, lysine 143, lysine 152, and 170 to 173; these read DGEQYK, GVIGD, TT, and CLKT. Zn(2+) is bound by residues glutamate 185, histidine 248, and histidine 265.

It belongs to the sugar phosphate cyclases superfamily. Dehydroquinate synthase family. Co(2+) is required as a cofactor. The cofactor is Zn(2+). Requires NAD(+) as cofactor.

The protein localises to the cytoplasm. It catalyses the reaction 7-phospho-2-dehydro-3-deoxy-D-arabino-heptonate = 3-dehydroquinate + phosphate. The protein operates within metabolic intermediate biosynthesis; chorismate biosynthesis; chorismate from D-erythrose 4-phosphate and phosphoenolpyruvate: step 2/7. Catalyzes the conversion of 3-deoxy-D-arabino-heptulosonate 7-phosphate (DAHP) to dehydroquinate (DHQ). The polypeptide is 3-dehydroquinate synthase (Photobacterium profundum (strain SS9)).